The sequence spans 431 residues: Enolase (431 aa).

Gln-167 is a binding site for (2R)-2-phosphoglycerate. Glu-209 acts as the Proton donor in catalysis. Asp-246, Glu-289, and Asp-316 together coordinate Mg(2+). 4 residues coordinate (2R)-2-phosphoglycerate: Lys-341, Arg-370, Ser-371, and Lys-392. Lys-341 functions as the Proton acceptor in the catalytic mechanism.

Belongs to the enolase family. In terms of assembly, component of the RNA degradosome, a multiprotein complex involved in RNA processing and mRNA degradation. Mg(2+) is required as a cofactor.

It localises to the cytoplasm. The protein resides in the secreted. The protein localises to the cell surface. It catalyses the reaction (2R)-2-phosphoglycerate = phosphoenolpyruvate + H2O. It participates in carbohydrate degradation; glycolysis; pyruvate from D-glyceraldehyde 3-phosphate: step 4/5. Catalyzes the reversible conversion of 2-phosphoglycerate (2-PG) into phosphoenolpyruvate (PEP). It is essential for the degradation of carbohydrates via glycolysis. This is Enolase from Shewanella sediminis (strain HAW-EB3).